Consider the following 424-residue polypeptide: 26S proteasome regulatory subunit 4 homolog (424 aa).

The segment covering 1 to 11 has biased composition (basic and acidic residues); that stretch reads MSRDKSERDNL. The disordered stretch occupies residues 1–33; it reads MSRDKSERDNLQDTTTINLRRRRRVKEGKAASK. ATP is bound at residue 210–217; the sequence is GLPGTGKT.

Belongs to the AAA ATPase family. The 26S proteasome consists of a 20S proteasome core and two 19S regulatory subunits. The 20S proteasome core is composed of 28 subunits that are arranged in four stacked rings, resulting in a barrel-shaped structure. The two end rings are each formed by seven alpha subunits, and the two central rings are each formed by seven beta subunits. The catalytic chamber with the active sites is on the inside of the barrel.

It localises to the cytoplasm. It is found in the nucleus. In terms of biological role, acts as a regulatory subunit of the 26S proteasome which degrades poly-ubiquitinated proteins in the cytoplasm and in the nucleus. It is essential for the regulated turnover of proteins and for the removal of misfolded proteins. The proteasome is a multicatalytic proteinase complex that is characterized by its ability to cleave peptides with Arg, Phe, Tyr, Leu, and Glu adjacent to the leaving group at neutral or slightly basic pH. This Encephalitozoon cuniculi (strain GB-M1) (Microsporidian parasite) protein is 26S proteasome regulatory subunit 4 homolog (RPT2).